Reading from the N-terminus, the 280-residue chain is MLRIENLDKRYKTGDRALKDVSLSIGAGDIVGLIGPSGAGKSTLIRCVNRLVQPTGGSIRLGDTELTRLGGTELRKARRRMGMIFQEFALIERLTVMENVLSGRLGYVGFWASWFRRFPQADVQRAFALLARVGLSEQVDKRADALSGGQRQRVGIARALAQDPELLLIDEPTASLDPKTSRQVMRLITELCAERGLAAIVNIHDVALAQLFLPRIVGLRAGEVVYDGPASGLTPDVLTRIYGEEDWSKTSDEDADSVDAPPRAADLPASLKLDPALARL.

In terms of domain architecture, ABC transporter spans 2–246; it reads LRIENLDKRY…VLTRIYGEED (245 aa). 35–42 contributes to the ATP binding site; it reads GPSGAGKS. The interval 247–266 is disordered; that stretch reads WSKTSDEDADSVDAPPRAAD.

This sequence belongs to the ABC transporter superfamily. Phosphonates importer (TC 3.A.1.9.1) family. As to quaternary structure, the complex is composed of two ATP-binding proteins (PhnC), two transmembrane proteins (PhnE) and a solute-binding protein (PhnD).

It is found in the cell inner membrane. The enzyme catalyses phosphonate(out) + ATP + H2O = phosphonate(in) + ADP + phosphate + H(+). In terms of biological role, part of the ABC transporter complex PhnCDE involved in phosphonates import. Responsible for energy coupling to the transport system. The chain is Phosphonates import ATP-binding protein PhnC 1 from Rhodopseudomonas palustris (strain HaA2).